A 106-amino-acid chain; its full sequence is Integration host factor subunit alpha (106 aa).

The protein belongs to the bacterial histone-like protein family. As to quaternary structure, heterodimer of an alpha and a beta chain.

In terms of biological role, this protein is one of the two subunits of integration host factor, a specific DNA-binding protein that functions in genetic recombination as well as in transcriptional and translational control. This Paramagnetospirillum magneticum (strain ATCC 700264 / AMB-1) (Magnetospirillum magneticum) protein is Integration host factor subunit alpha.